A 403-amino-acid chain; its full sequence is Accessory Sec system protein translocase subunit SecY2 (403 aa).

10 consecutive transmembrane segments (helical) span residues 17 to 37 (MLYT…SIVS), 63 to 83 (LNIF…LMLI), 105 to 125 (ILTL…YVSK), 131 to 151 (DNIY…VWLA), 157 to 177 (YGIA…MMHQ), 186 to 206 (HIVI…LLFI), 240 to 260 (ITLM…HFIL), 276 to 296 (FDSP…GYFL), 339 to 359 (WFGL…TLFV), and 366 to 386 (IYFS…AETI).

Belongs to the SecY/SEC61-alpha family. SecY2 subfamily. In terms of assembly, may form heterotrimers with SecE and SecG subunits (Potential). Component of the accessory SecA2/SecY2 protein translocase complex required to export cell wall protein SrpA.

The protein localises to the cell membrane. In terms of biological role, the central subunit of a protein translocation channel (Potential). Part of the accessory SecA2/SecY2 system specifically required to export SraP, a serine-rich repeat cell wall protein encoded upstream in the same operon. This is Accessory Sec system protein translocase subunit SecY2 from Staphylococcus aureus (strain NCTC 8325 / PS 47).